We begin with the raw amino-acid sequence, 309 residues long: Homoserine kinase (309 aa).

Residue 91-101 (PIGSGLGSSAC) coordinates ATP.

Belongs to the GHMP kinase family. Homoserine kinase subfamily.

It localises to the cytoplasm. The catalysed reaction is L-homoserine + ATP = O-phospho-L-homoserine + ADP + H(+). Its pathway is amino-acid biosynthesis; L-threonine biosynthesis; L-threonine from L-aspartate: step 4/5. Catalyzes the ATP-dependent phosphorylation of L-homoserine to L-homoserine phosphate. In Erwinia tasmaniensis (strain DSM 17950 / CFBP 7177 / CIP 109463 / NCPPB 4357 / Et1/99), this protein is Homoserine kinase.